Here is a 104-residue protein sequence, read N- to C-terminus: Naphthalene 1,2-dioxygenase/salicylate 5-hydroxylase systems, ferredoxin component (104 aa).

In terms of domain architecture, Rieske spans 6-101 (IDAACLDDIP…VKIENMRVML (96 aa)). 4 residues coordinate [2Fe-2S] cluster: Cys-45, His-47, Cys-64, and His-67.

The protein belongs to the bacterial ring-hydroxylating dioxygenase ferredoxin component family. As to quaternary structure, ferredoxin NagAb belongs to both the salicylate 5-hydroxylase (S5H) and the naphthalene 1,2-dioxygenase (NDO) multicomponent enzyme systems. The NDO multicomponent enzyme system is composed of an electron transfer component and a dioxygenase component (iron sulfur protein (ISP)). The electron transfer component is composed of a ferredoxin reductase (NagAa) and a ferredoxin (NagAb), and the dioxygenase component is formed by a large alpha subunit (NagAc) and a small beta subunit (NagAd). The S5H multicomponent enzyme system is composed of an electron transfer component and a monooxygenase component. The electron transfer component is composed of a ferredoxin reductase (NagAa) and a ferredoxin (NagAb), and the monooxygenase component is formed by a large subunit (NagG) and a small subunit (NagH). [2Fe-2S] cluster is required as a cofactor.

It functions in the pathway aromatic compound metabolism; naphthalene degradation. Its function is as follows. Component of two multicomponent enzyme systems which are involved in the catabolism of naphthalene. Plays a role as an electron transfer component for both salicylate 5-hydroxylase (S5H) and naphthalene 1,2-dioxygenase (NDO) systems, by transferring electrons to the oxygenase components. The polypeptide is Naphthalene 1,2-dioxygenase/salicylate 5-hydroxylase systems, ferredoxin component (Ralstonia sp).